The sequence spans 91 residues: Potassium channel toxin BmTXK-beta-2 (91 aa).

An N-terminal signal peptide occupies residues M1–C19. Positions G20–Q27 are excised as a propeptide. Residues Q54 to F91 form the BetaSPN-type CS-alpha/beta domain. 3 cysteine pairs are disulfide-bonded: C57–C78, C64–C83, and C68–C85.

It belongs to the long chain scorpion toxin family. Class 1 subfamily. As to expression, expressed by the venom gland.

The protein resides in the secreted. Its function is as follows. Inhibits voltage-gated potassium channel. The chain is Potassium channel toxin BmTXK-beta-2 from Olivierus martensii (Manchurian scorpion).